Here is a 454-residue protein sequence, read N- to C-terminus: Gustatory and odorant receptor 21a (454 aa).

The Cytoplasmic segment spans residues 1 to 114 (MTFLDRTMSF…LPRTGYSWGS (114 aa)). Residues 115 to 135 (KQVMWAIFIYSCQTTIVVLVL) form a helical membrane-spanning segment. Residues 136–153 (RERVKKFVTSPDKRFDEA) lie on the Extracellular side of the membrane. A helical transmembrane segment spans residues 154–174 (IYNVIFISLLFTNFLLPVASW). Over 175–206 (RHGPQVAIFKNMWTNYQYKFFKTTGSPIVFPN) the chain is Cytoplasmic. A helical membrane pass occupies residues 207 to 227 (LYPLTWSLCVFSWLLSIAINL). The Extracellular portion of the chain corresponds to 228-237 (SQYFLQPDFR). Residues 238–258 (LWYTFAYYPIIAMLNCFCSLW) form a helical membrane-spanning segment. The Cytoplasmic portion of the chain corresponds to 259 to 312 (YINCNAFGTASRALSDALQTTIRGEKPAQKLTEYRHLWVDLSHMMQQLGRAYSN). The chain crosses the membrane as a helical span at residues 313 to 333 (MYGMYCLVIFFTTIIATYGSI). At 334–345 (SEIIDHGATYKE) the chain is on the extracellular side. A helical membrane pass occupies residues 346–366 (VGLFVIVFYCMGLLYIICNEA). Over 367 to 422 (HYASRKVGLDFQTKLLNINLTAVDAATQKEVEMLLVAINKNPPIMNLDGYANINRE) the chain is Cytoplasmic. A helical membrane pass occupies residues 423–443 (LITTNISFMATYLVVLLQFKI). At 444 to 454 (TEQRRIGQQQA) the chain is on the extracellular side.

This sequence belongs to the insect chemoreceptor superfamily. Gustatory receptor (GR) family. Gr21a subfamily. Gr21a and Gr63a probably form a heterodimer that responds to CO(2). Expressed in the adult labellar chemosensory neurons. Carbon dioxide-responsive neurons coexpress Gr21a and Gr63a in a pair of chemosensory receptors at both larval and adult life stages. A single bilateral neuron, expressing the Gr21a receptor, is responsible for CO(2) detection in larvae.

It is found in the cell membrane. Functionally, gustatory and odorant receptor which mediates acceptance or avoidance behavior, depending on its substrates. Gr21a and Gr63a together are sufficient for carbon dioxide detection and avoidance behavior. It is possible that the CO(2) receptors Gr63a and Gr21a activate the TRPC channels through Galpha49B and Plc21C. This innate olfactory avoidance behavior can be inhibited by inhibitory interactions of the odors such as 1-hexanol and 2,3-butanedione with Gr21a and Gr63a. The protein is Gustatory and odorant receptor 21a (Gr21a) of Drosophila melanogaster (Fruit fly).